The sequence spans 403 residues: D-galactonate dehydratase family member RspA (403 aa).

The substrate site is built by N37 and H122. Y159 serves as the catalytic Proton donor/acceptor. D211 contacts Mg(2+). H213 serves as the catalytic Proton donor/acceptor. Residues E237 and E263 each coordinate Mg(2+). Substrate contacts are provided by E263, R284, H313, D317, and E340.

This sequence belongs to the mandelate racemase/muconate lactonizing enzyme family. GalD subfamily. Mg(2+) serves as cofactor.

The catalysed reaction is D-mannonate = 2-dehydro-3-deoxy-D-gluconate + H2O. It carries out the reaction D-gluconate = 2-dehydro-3-deoxy-D-gluconate + H2O. In terms of biological role, has low dehydratase activity with D-mannonate and D-gluconate, suggesting that these are not physiological substrates and that it has no significant role in the in vivo degradation of these compounds. Has no detectable activity with a panel of 70 other acid sugars (in vitro). In Halomonas elongata (strain ATCC 33173 / DSM 2581 / NBRC 15536 / NCIMB 2198 / 1H9), this protein is D-galactonate dehydratase family member RspA (rspA).